A 399-amino-acid chain; its full sequence is Bombesin receptor subtype-3 (399 aa).

The segment covering 1 to 31 (MSQRQPQSPNQTLISTTNDTESSSSVVPNDS) has biased composition (polar residues). The segment at 1 to 38 (MSQRQPQSPNQTLISTTNDTESSSSVVPNDSTNKRRTG) is disordered. Over 1 to 41 (MSQRQPQSPNQTLISTTNDTESSSSVVPNDSTNKRRTGDNS) the chain is Extracellular. N-linked (GlcNAc...) asparagine glycosylation is found at Asn-10, Asn-18, and Asn-29. Residues 42 to 63 (PGIEALCAIYITYAVIISVGIL) form a helical membrane-spanning segment. The Cytoplasmic segment spans residues 64–82 (GNAILIKVFFKTKSMQTVP). The chain crosses the membrane as a helical span at residues 83 to 103 (NIFITSLAFGDLLLLLTCVPV). At 104-121 (DVTHYLAEGWLFGRIGCK) the chain is on the extracellular side. Cys-120 and Cys-203 are oxidised to a cystine. A helical transmembrane segment spans residues 122–143 (VLSFIRLTSVGVSVFTLTILSA). At 144 to 163 (DRYKAVVKPLERQPPNAILK) the chain is on the cytoplasmic side. Residues 164–184 (TCAKAGCIWIMSMIIALPEAI) form a helical membrane-spanning segment. The Extracellular portion of the chain corresponds to 185–220 (FSNVYTFQDPDKNVTFKACASYPVSERLLQEIHSLL). Residues 221 to 241 (CFLVFYIIPLSIISVYYSLIA) form a helical membrane-spanning segment. Over 242 to 272 (RTLYKSTLNIPTEEQRHARKQIESRKRIAKT) the chain is Cytoplasmic. A helical transmembrane segment spans residues 273 to 293 (VLVLVALFALCWLPNHLLYLY). Residues 294–313 (RSFTSQTYMDSSTVHLFVTI) are Extracellular-facing. A helical membrane pass occupies residues 314-333 (ISRILAFSNSCVNPFALYWL). The Cytoplasmic portion of the chain corresponds to 334–399 (SNTFQQHFKA…CSVKKEDDRV (66 aa)).

The protein belongs to the G-protein coupled receptor 1 family. Interacts with C6orf89.

The protein localises to the cell membrane. Its function is as follows. Role in sperm cell division, maturation, or function. This receptor mediates its action by association with G proteins that activate a phosphatidylinositol-calcium second messenger system. The protein is Bombesin receptor subtype-3 (BRS3) of Ovis aries (Sheep).